The primary structure comprises 80 residues: MKKPLRQQNRQIISYIPRTEPAPPEHAIKMDSFRDVWMLRGKYVAFVLMGESFMRSPAFTVPESAQRWANQIRQEGEVTE.

Belongs to the CedA family.

In terms of biological role, activates the cell division inhibited by chromosomal DNA over-replication. This is Cell division activator CedA from Escherichia coli (strain SMS-3-5 / SECEC).